The chain runs to 413 residues: Synaptosomal-associated protein 47 (413 aa).

Residues 109-171 form the t-SNARE coiled-coil homology 1 domain; it reads AANIPSHVTR…DVADRLLTEL (63 aa). The segment at 321–342 is disordered; sequence RHAASRPKGCTPHRELPTGGQE. The 63-residue stretch at 350–412 folds into the t-SNARE coiled-coil homology 2 domain; the sequence is KNLPLFSEGE…DKQNRRMRKL (63 aa).

Belongs to the SVAP1 family. As to quaternary structure, associates with the BLOC-1 complex. Interacts with BLOC1S6. Forms a complex containing SNAP47, VAMP2 and STX1A. As to expression, ubiquitously expressed with the most abundant expression in the brain. In brain, most highly expressed in the glomerular layer of the olfactory bulb, the cortex, striatum, hippocampus, and colliculi (at protein level).

It is found in the endomembrane system. The protein resides in the cytoplasm. It localises to the perinuclear region. Functionally, may play a role in intracellular membrane fusion. This is Synaptosomal-associated protein 47 (Snap47) from Mus musculus (Mouse).